Here is a 196-residue protein sequence, read N- to C-terminus: Cupin-domain-containing oxidoreductase srdD (196 aa).

Residues Asp99 to Met165 form a cupin-like domain region.

Belongs to the virC family.

Its function is as follows. Highly reducing polyketide synthase; part of the gene cluster that mediates the biosynthesis of sordarial, a salicylic aldehyde structurally related to the phytotoxin pyriculol. The most interesting aspect of this pathway is formation of an aromatic product from the highly reducing polyketide synthase srdA. SrdA synthesizes a reduced polyketide chain from one molecule of acetyl-CoA and five molecules of malonyl-CoA. The polyketide chain is then reductively released as an aldehyde. The oxidoreductases srdC, srdD and srdE then oxidize one of the hydroxy groups to facilitate the intramolecular aldol condensation, followed by dehydration to yield a salicylic aldehyde. This aldehyde can undergo facile reduction by endogenous reductases to yield the alcohol 1-hydroxy-2-hydroxymethyl-3-pent-1,3-dienylbenzene. The flavin-dependent srdI counteract against the propensity of the aldehydes to be reduced under physiological conditions and is responsible for reoxidizing 1-hydroxy-2-hydroxymethyl-3-pent-1,3-dienylbenzene back to the salicylic aldehyde. This salicylic aldehyde is then selectively epoxidized by the cupin-domain-containing oxidoreductase srdB to yield the epoxide, which can be hydrolyzed stereoselectively by the hydrolase srdG to give the final product sordarial. This is Cupin-domain-containing oxidoreductase srdD from Neurospora crassa (strain ATCC 24698 / 74-OR23-1A / CBS 708.71 / DSM 1257 / FGSC 987).